The following is a 198-amino-acid chain: Ribonuclease HII (198 aa).

An RNase H type-2 domain is found at 10 to 198; the sequence is HLVAGVDEVG…PVKRALGLVS (189 aa). Residues Asp16, Glu17, and Asp108 each contribute to the a divalent metal cation site.

The protein belongs to the RNase HII family. Mn(2+) is required as a cofactor. The cofactor is Mg(2+).

Its subcellular location is the cytoplasm. It carries out the reaction Endonucleolytic cleavage to 5'-phosphomonoester.. Functionally, endonuclease that specifically degrades the RNA of RNA-DNA hybrids. The chain is Ribonuclease HII from Salmonella paratyphi A (strain AKU_12601).